A 1429-amino-acid chain; its full sequence is uncharacterized protein (1429 aa).

Disordered regions lie at residues 1–76 (MEGE…SGIE) and 103–130 (PAGA…AGEK). Positions 14–29 (SHSTSVVSERASSSGV) are enriched in low complexity. A compositionally biased stretch (polar residues) spans 109–121 (SAQNANLISSKSE). Helical transmembrane passes span 197-217 (LTGQ…LSWI) and 225-245 (FFIL…CMIS). The SMP-LTD domain occupies 266–471 (DYETMSWFNT…WPNMFDYDLS (206 aa)). 2 consecutive C2 domains span residues 462–584 (WPNM…GDIY) and 738–858 (TPVD…DRSA). The disordered stretch occupies residues 899–932 (NTDNSSKQSSENVQSATDPTTPAKDNSTSNAETS). A C2 3 domain is found at 1060–1177 (TYMPVPMTLN…EPNVESQQSI (118 aa)). The disordered stretch occupies residues 1280-1303 (EKNPSRSDLTTTQEASSSASVPPA). Residues 1294–1303 (ASSSASVPPA) show a composition bias toward low complexity.

The protein resides in the membrane. This is an uncharacterized protein from Schizosaccharomyces pombe (strain 972 / ATCC 24843) (Fission yeast).